The following is a 309-amino-acid chain: Caspase-7 (309 aa).

The propeptide at 1–24 is N-terminally processed; the sequence is MSGDQHADRSSGEKSNGDQDDTVD. The span at 1–31 shows a compositional bias: basic and acidic residues; the sequence is MSGDQHADRSSGEKSNGDQDDTVDAKPDRSS. The interval 1 to 53 is disordered; it reads MSGDQHADRSSGEKSNGDQDDTVDAKPDRSSRLSLFAKKKKNGEEEQPKSSLS. An exosite region spans residues 39-42; that stretch reads KKKN. The loop L1 stretch occupies residues 81–92; the sequence is KNFEDKTGMGTR. Active-site residues include H149 and C191. The segment at 192–201 is loop L2; that stretch reads RGSEFDEGIQ. The propeptide occupies 204 to 214; that stretch reads SGPANDTLETD. Residues 234-246 are loop L3; sequence VPGYYSWRNPGRG. Positions 282-296 are loop L4; the sequence is ESQSDDPRFSEKKQI.

The protein belongs to the peptidase C14A family. Heterotetramer that consists of two anti-parallel arranged heterodimers, each one formed by a 20 kDa (p20) and a 11 kDa (p11) subunit. Post-translationally, cleavage by different proteases, such as granzyme B (GZMB), caspase-1 (CASP1), caspase-8 (CASP8) or caspase-9 (CASP9) generate the two active subunits. Its involvement in different programmed cell death processes is probably specified by the protease that activates CASP7. Cleaved and activated by initiator caspases (CASP8 and/or CASP9), leading to execution phase of apoptosis. Cleavage and maturation by GZMB regulates granzyme-mediated programmed cell death. Cleaved and activated by CASP1 in response to bacterial infection.

The protein localises to the cytoplasm. The protein resides in the cytosol. Its subcellular location is the nucleus. It is found in the secreted. It localises to the extracellular space. It catalyses the reaction Strict requirement for an Asp residue at position P1 and has a preferred cleavage sequence of Asp-Glu-Val-Asp-|-.. During activation, the N-terminal disordered prodomain is removed by cleavage. Concomitantly, double cleavage gives rise to a large Caspase-7 subunit p20 and a small Caspase-7 subunit p11. The two large and two small subunits then assemble to form the active CASP7 complex. Can be cleaved and activated by different caspases, depending on the context. Cleaved and activated by initiator caspases (CASP8 and/or CASP9), leading to execution phase of apoptosis. Cleavage and maturation by GZMB regulates granzyme-mediated programmed cell death. Cleavage and maturation by CASP1 regulates pyroptosis. Inhibited by BIRC6; following inhibition of BIRC6-caspase binding by DIABLO/SMAC, BIRC6 is subjected to caspase cleavage, leading to an increase in active caspases. In terms of biological role, thiol protease involved in different programmed cell death processes, such as apoptosis, pyroptosis or granzyme-mediated programmed cell death, by proteolytically cleaving target proteins. Has a marked preference for Asp-Glu-Val-Asp (DEVD) consensus sequences, with some plasticity for alternate non-canonical sequences. Its involvement in the different programmed cell death processes is probably determined by upstream proteases that activate CASP7. Acts as an effector caspase involved in the execution phase of apoptosis: following cleavage and activation by initiator caspases (CASP8 and/or CASP9), mediates execution of apoptosis by catalyzing cleavage of proteins. Compared to CASP3, acts as a minor executioner caspase and cleaves a limited set of target proteins. Acts as a key regulator of the inflammatory response in response to bacterial infection by catalyzing cleavage and activation of the sphingomyelin phosphodiesterase SMPD1 in the extracellular milieu, thereby promoting membrane repair. Cleaves BIRC6 following inhibition of BIRC6-caspase binding by DIABLO/SMAC. This Gallus gallus (Chicken) protein is Caspase-7.